An 81-amino-acid chain; its full sequence is Short neurotoxin 1 (81 aa).

A signal peptide spans 1-21 (MKTLLLTLVVVTIVFLDLGYT). Cystine bridges form between Cys-24–Cys-43, Cys-38–Cys-60, Cys-62–Cys-73, and Cys-74–Cys-79.

This sequence belongs to the three-finger toxin family. Short-chain subfamily. Type I alpha-neurotoxin sub-subfamily. In terms of tissue distribution, expressed by the venom gland.

Its subcellular location is the secreted. Its function is as follows. Binds to muscle nicotinic acetylcholine receptor (nAChR) and inhibit acetylcholine from binding to the receptor, thereby impairing neuromuscular transmission. In Notechis scutatus scutatus (Mainland tiger snake), this protein is Short neurotoxin 1.